The following is a 186-amino-acid chain: UPF0340 protein SZO_02480 (186 aa).

Belongs to the UPF0340 family.

In Streptococcus equi subsp. zooepidemicus (strain H70), this protein is UPF0340 protein SZO_02480.